Here is a 204-residue protein sequence, read N- to C-terminus: Large ribosomal subunit protein uL4 (204 aa).

The disordered stretch occupies residues 49–90 (KVKGMGEVSGTTKKPYRQKGTGSARQGSLRAPQYRTGGAVHG).

Belongs to the universal ribosomal protein uL4 family. In terms of assembly, part of the 50S ribosomal subunit.

In terms of biological role, one of the primary rRNA binding proteins, this protein initially binds near the 5'-end of the 23S rRNA. It is important during the early stages of 50S assembly. It makes multiple contacts with different domains of the 23S rRNA in the assembled 50S subunit and ribosome. Functionally, forms part of the polypeptide exit tunnel. This Gluconacetobacter diazotrophicus (strain ATCC 49037 / DSM 5601 / CCUG 37298 / CIP 103539 / LMG 7603 / PAl5) protein is Large ribosomal subunit protein uL4.